Reading from the N-terminus, the 822-residue chain is Epidermal growth factor receptor kinase substrate 8 (822 aa).

Position 58 is a phosphoserine (Ser58). One can recognise a PTB domain in the interval Gln64 to Arg194. Disordered stretches follow at residues Lys204–Val224, Ser295–Ala320, and Val460–Pro487. The span at Gly208–Pro221 shows a compositional bias: pro residues. Thr223 carries the post-translational modification Phosphothreonine. Residues Lys299–Lys309 are compositionally biased toward basic residues. Thr317 carries the phosphothreonine modification. Basic and acidic residues predominate over residues Gln466–Thr477. Ser476 is modified (phosphoserine). One can recognise an SH3 domain in the interval Gln531–Thr590. A disordered region spans residues Lys608–Ser685. Positions Ala623–Lys649 are enriched in pro residues. A Phosphoserine; by MAPK modification is found at Ser625. Residue Thr629 is modified to Phosphothreonine; by MAPK. The interval Lys649–His822 is effector region. Ser659, Ser662, and Ser685 each carry phosphoserine. Over residues Asp671–Ser685 the composition is skewed to basic and acidic residues. Residues Val680–Leu698 form an amphipathic helix region. 4 helix bundle regions span residues Val718–Gly738, Gly752–Ser757, Glu762–Cys767, and Val766–Glu785. The tract at residues Ser787–His822 is disordered. 2 positions are modified to phosphoserine: Ser811 and Ser815.

The protein belongs to the EPS8 family. As to quaternary structure, homodimer. Part of a complex consisting of ABI1, EPS8 and SOS1. Interacts with BAIAP2. Interacts with SHB and LANCL1. Interacts with EGFR; mediates EPS8 phosphorylation. Interacts with MYO15A and WHRN. Ubiquitinated by the SCF(FBXW5) E3 ubiquitin-protein ligase complex during G2 phase, leading to its transient degradation and subsequent cell shape changes required to allow mitotic progression. Reappears at the midzone of dividing cells. Post-translationally, phosphorylation at Ser-625 and Thr-629 by MAPK following BDNF treatment promotes removal from actin and filopodia formation. Phosphorylated by several receptor tyrosine kinases. In terms of tissue distribution, expressed in neuronal cell body and neurites, and prominently enriched in the axonal growth cone.

It localises to the synapse. It is found in the synaptosome. Its subcellular location is the cytoplasm. The protein resides in the cell cortex. The protein localises to the cell projection. It localises to the ruffle membrane. It is found in the stereocilium. Its subcellular location is the growth cone. Its function is as follows. Signaling adapter that controls various cellular protrusions by regulating actin cytoskeleton dynamics and architecture. Depending on its association with other signal transducers, can regulate different processes. Together with SOS1 and ABI1, forms a trimeric complex that participates in transduction of signals from Ras to Rac by activating the Rac-specific guanine nucleotide exchange factor (GEF) activity. Acts as a direct regulator of actin dynamics by binding actin filaments and has both barbed-end actin filament capping and actin bundling activities depending on the context. Displays barbed-end actin capping activity when associated with ABI1, thereby regulating actin-based motility process: capping activity is auto-inhibited and inhibition is relieved upon ABI1 interaction. Also shows actin bundling activity when associated with BAIAP2, enhancing BAIAP2-dependent membrane extensions and promoting filopodial protrusions. Involved in the regulation of processes such as axonal filopodia growth, stereocilia length, dendritic cell migration and cancer cell migration and invasion. Acts as a regulator of axonal filopodia formation in neurons: in the absence of neurotrophic factors, negatively regulates axonal filopodia formation via actin-capping activity. In contrast, it is phosphorylated in the presence of BDNF leading to inhibition of its actin-capping activity and stimulation of filopodia formation. Component of a complex with WHRN and MYO15A that localizes at stereocilia tips and is required for elongation of the stereocilia actin core. Indirectly involved in cell cycle progression; its degradation following ubiquitination being required during G2 phase to promote cell shape changes. This Rattus norvegicus (Rat) protein is Epidermal growth factor receptor kinase substrate 8 (Eps8).